A 75-amino-acid chain; its full sequence is UPF0352 protein VV1_3121 (75 aa).

This sequence belongs to the UPF0352 family.

The chain is UPF0352 protein VV1_3121 from Vibrio vulnificus (strain CMCP6).